The following is a 275-amino-acid chain: Bis(5'-nucleosyl)-tetraphosphatase, symmetrical (275 aa).

This sequence belongs to the Ap4A hydrolase family.

It catalyses the reaction P(1),P(4)-bis(5'-adenosyl) tetraphosphate + H2O = 2 ADP + 2 H(+). Functionally, hydrolyzes diadenosine 5',5'''-P1,P4-tetraphosphate to yield ADP. This Haemophilus influenzae (strain PittEE) protein is Bis(5'-nucleosyl)-tetraphosphatase, symmetrical.